Here is a 219-residue protein sequence, read N- to C-terminus: MSDKTPTKKGGSHAMTLRERGVTKPPKKSEKLQQYKKAIAAEQTLRTTADVSSLQNPGESAVFQELERLENAVVVLENEQKRLYPILDTPLDNFIVAFVNPTYPMAYFVNTDYKLKLECARIRSDLLYKNKNEVAINRPKISSFKLQLNNVILDTIETIEYDLQNKVLTITAPVQDQELRKSIIYFNILNSDSWEVPKYMKKLFDEMQLEPPVILPLGL.

The disordered stretch occupies residues 1–34 (MSDKTPTKKGGSHAMTLRERGVTKPPKKSEKLQQ). Residues 16–33 (TLRERGVTKPPKKSEKLQ) are compositionally biased toward basic and acidic residues. Residues 103 to 134 (YPMAYFVNTDYKLKLECARIRSDLLYKNKNEV) are NEBU-like domain.

Interacts with viral envelope protein E18 and the DNA-binding protein p6.9.

Its subcellular location is the host cytoplasm. The protein localises to the host nucleus. It localises to the virion. Functionally, plays an essential role in nucleocapsid entry in host nucleus. May act by binding and stabilizing F-actin in the infected cell, which might attach to nucleocapsids and then push the nucleocapsids into the nucleus. The sequence is that of Protein Ac132 (Ac132) from Autographa californica nuclear polyhedrosis virus (AcMNPV).